The primary structure comprises 147 residues: Small ribosomal subunit protein uS12 (147 aa).

The protein belongs to the universal ribosomal protein uS12 family. In terms of assembly, part of the 30S ribosomal subunit.

Functionally, with S4 and S5 plays an important role in translational accuracy. Located at the interface of the 30S and 50S subunits. This chain is Small ribosomal subunit protein uS12, found in Staphylothermus marinus (strain ATCC 43588 / DSM 3639 / JCM 9404 / F1).